A 180-amino-acid chain; its full sequence is Endoribonuclease YbeY (180 aa).

Zn(2+)-binding residues include His-118, His-122, and His-128.

This sequence belongs to the endoribonuclease YbeY family. It depends on Zn(2+) as a cofactor.

It is found in the cytoplasm. Functionally, single strand-specific metallo-endoribonuclease involved in late-stage 70S ribosome quality control and in maturation of the 3' terminus of the 16S rRNA. The sequence is that of Endoribonuclease YbeY from Rhodococcus erythropolis (strain PR4 / NBRC 100887).